Consider the following 568-residue polypeptide: CRISPR-associated exonuclease Cas4/endonuclease Cas1 fusion (568 aa).

Residues 1–209 (MSVVVTRYRG…KCSLAPVCLP (209 aa)) form a CRISPR-associated exonuclease Cas4 region. [4Fe-4S] cluster is bound at residue C43. Residues D95 and E108 each contribute to the Mn(2+) site. C198, C201, and C207 together coordinate [4Fe-4S] cluster. Residues 232-568 (VLHVATPGTR…PGLFATFRLR (337 aa)) form a CRISPR-associated endonuclease Cas1 region. Mn(2+) contacts are provided by E390, H459, and E474.

This sequence in the N-terminal section; belongs to the CRISPR-associated exonuclease Cas4 family. It in the C-terminal section; belongs to the CRISPR-associated endonuclease Cas1 family. In terms of assembly, homodimer, forms a heterotetramer with a Cas2 homodimer. [4Fe-4S] cluster serves as cofactor. Mg(2+) is required as a cofactor. The cofactor is Mn(2+).

It catalyses the reaction exonucleolytic cleavage in the 5'- to 3'-direction to yield nucleoside 3'-phosphates.. Its function is as follows. CRISPR (clustered regularly interspaced short palindromic repeat), is an adaptive immune system that provides protection against mobile genetic elements (viruses, transposable elements and conjugative plasmids). CRISPR clusters contain spacers, sequences complementary to antecedent mobile elements, and target invading nucleic acids. CRISPR clusters are transcribed and processed into CRISPR RNA (crRNA). The Cas4 region acts as a ssDNA exonuclease, while the Cas1 region acts as a dsDNA endonuclease. Involved in the integration of spacer DNA into the CRISPR cassette. The chain is CRISPR-associated exonuclease Cas4/endonuclease Cas1 fusion (cas4-cas1) from Myxococcus xanthus (strain DK1622).